A 190-amino-acid chain; its full sequence is Ribosome maturation factor RimP (190 aa).

The segment at Glu159–Lys190 is disordered. The span at Asp177–Lys190 shows a compositional bias: acidic residues.

Belongs to the RimP family.

The protein resides in the cytoplasm. Required for maturation of 30S ribosomal subunits. The chain is Ribosome maturation factor RimP from Rhodococcus opacus (strain B4).